Here is a 136-residue protein sequence, read N- to C-terminus: uncharacterized protein (136 aa).

Residues 1–51 (MAANATSGRPPSIALRQPEATGWRRGIPAKVATKGTQAEREGDVRSGGRAR) are disordered. Over residues 37-46 (QAEREGDVRS) the composition is skewed to basic and acidic residues.

This is an uncharacterized protein from Homo sapiens (Human).